The primary structure comprises 481 residues: Glutamyl-tRNA(Gln) amidotransferase subunit A (481 aa).

Active-site charge relay system residues include Lys76 and Ser151. Ser175 acts as the Acyl-ester intermediate in catalysis.

The protein belongs to the amidase family. GatA subfamily. In terms of assembly, heterotrimer of A, B and C subunits.

It catalyses the reaction L-glutamyl-tRNA(Gln) + L-glutamine + ATP + H2O = L-glutaminyl-tRNA(Gln) + L-glutamate + ADP + phosphate + H(+). Allows the formation of correctly charged Gln-tRNA(Gln) through the transamidation of misacylated Glu-tRNA(Gln) in organisms which lack glutaminyl-tRNA synthetase. The reaction takes place in the presence of glutamine and ATP through an activated gamma-phospho-Glu-tRNA(Gln). This chain is Glutamyl-tRNA(Gln) amidotransferase subunit A, found in Neisseria gonorrhoeae (strain ATCC 700825 / FA 1090).